A 338-amino-acid polypeptide reads, in one-letter code: Phosphate acyltransferase (338 aa).

The protein belongs to the PlsX family. As to quaternary structure, homodimer. Probably interacts with PlsY.

Its subcellular location is the cytoplasm. It carries out the reaction a fatty acyl-[ACP] + phosphate = an acyl phosphate + holo-[ACP]. It functions in the pathway lipid metabolism; phospholipid metabolism. Catalyzes the reversible formation of acyl-phosphate (acyl-PO(4)) from acyl-[acyl-carrier-protein] (acyl-ACP). This enzyme utilizes acyl-ACP as fatty acyl donor, but not acyl-CoA. This is Phosphate acyltransferase from Endomicrobium trichonymphae.